The primary structure comprises 398 residues: Putative defective protein IntQ (398 aa).

Residues 51–146 (LTIKELAEKF…NLNAVFQFGV (96 aa)) enclose the Core-binding (CB) domain. The Tyr recombinase domain occupies 167–378 (TIPDPLSREE…SENNNAQVAL (212 aa)). Active-site residues include R202, K236, R331, and H354. The O-(3'-phospho-DNA)-tyrosine intermediate role is filled by Y364.

This sequence belongs to the 'phage' integrase family.

Integrase is necessary for integration of the phage into the host genome by site-specific recombination. In conjunction with excisionase, integrase is also necessary for excision of the prophage from the host genome. This Escherichia coli (strain K12) protein is Putative defective protein IntQ (intQ).